Consider the following 337-residue polypeptide: Major outer membrane protein P.IB (337 aa).

Residues 1 to 19 (MKKSLIALTLAALPVAAMA) form the signal peptide.

It belongs to the Gram-negative porin family. As to quaternary structure, homotrimer.

Its subcellular location is the cell outer membrane. Functionally, serves as a slightly cation selective porin. This chain is Major outer membrane protein P.IB (por), found in Neisseria lactamica.